The following is a 38-amino-acid chain: Large ribosomal subunit protein bL36 (38 aa).

It belongs to the bacterial ribosomal protein bL36 family.

The sequence is that of Large ribosomal subunit protein bL36 from Flavobacterium psychrophilum (strain ATCC 49511 / DSM 21280 / CIP 103535 / JIP02/86).